The chain runs to 440 residues: Na(+)/H(+) antiporter NhaA (440 aa).

Transmembrane regions (helical) follow at residues F25 to V45, L76 to V96, T112 to M132, G141 to G161, V170 to G190, S194 to S214, V225 to I245, H312 to I332, V345 to I365, W378 to I398, and G414 to L434.

Belongs to the NhaA Na(+)/H(+) (TC 2.A.33) antiporter family.

The protein localises to the cell inner membrane. The catalysed reaction is Na(+)(in) + 2 H(+)(out) = Na(+)(out) + 2 H(+)(in). Its function is as follows. Na(+)/H(+) antiporter that extrudes sodium in exchange for external protons. The protein is Na(+)/H(+) antiporter NhaA of Rhodopirellula baltica (strain DSM 10527 / NCIMB 13988 / SH1).